The chain runs to 8799 residues: Nesprin-1 (8799 aa).

Residues 1–289 (MATSRASSRS…TQYPDIHGAG (289 aa)) are actin-binding. At 1–8748 (MATSRASSRS…GRAFLFRILR (8748 aa)) the chain is on the cytoplasmic side. 2 Calponin-homology (CH) domains span residues 27 to 134 (IVQK…LYFQ) and 178 to 283 (GNAK…TQYP). 52 Spectrin repeats span residues 314–397 (RDDR…SRLF), 398–502 (DWHI…HLMK), 503–609 (MEFL…SMLE), 610–703 (EVIS…YARA), 704–815 (DEMD…QLTV), 816–923 (PLEE…KHVE), 924–1024 (ANSR…HLKI), 1025–1122 (AVEK…LVDD), 1123–1246 (PDKW…SSLE), 1247–1333 (GLIS…ERRI), 1334–1442 (QVSL…MEMV), 1443–1548 (KSKW…ILGH), 1549–1651 (LSQQ…LEDL), 1652–1761 (LARW…LQSV), 1762–1877 (LAEH…SHAC), 1878–1974 (MSTL…ADAL), 1975–2079 (VALK…QGQC), 2080–2193 (CGLI…LRVS), 2194–2301 (LSIW…KDFT), 2302–2399 (AQRT…QTQA), 2400–2511 (RIQD…LQDC), 2512–2617 (VSEL…LRSC), 2618–2729 (QLAL…LESV), 2730–2836 (IDQW…VEDL), 2837–2960 (VKDH…FGQV), 2961–3060 (TQLE…QNKE), 3061–3169 (QILQ…LENL), 3170–3273 (KIQM…VSRL), 3274–3385 (DRII…LEGA), 3386–3488 (LSKW…LEKL), 3489–3591 (VRLH…RMQL), 3592–3718 (NNVV…YSDW), 3719–3812 (YGST…LEKG), 3813–3918 (LHLA…LEAK), 3919–4026 (VKDH…QRVY), 4027–4137 (RSLE…KSLK), 4138–4233 (AELW…REQD), 4234–4337 (LQRT…IQVS), 4338–4449 (VTNL…LNKA), 4450–4558 (LSEK…LEKS), 4559–4667 (LVSR…TQEA), 4668–4774 (ILAR…LEDT), 4775–4880 (TSVY…CESR), 4881–4989 (MVQS…LTEI), 4990–5097 (YSRC…LQRC), 5098–5207 (MVQW…LEDA), 5208–5316 (VDEW…GKLV), 5317–5422 (KQEL…EEGK), 5423–5520 (AMSQ…LSKL), 5521–5628 (NQAL…LQDA), 5629–5745 (AKDM…PKEA), and 5746–5851 (VVQY…PSAH). Residues 314 to 8666 (RDDRLILKET…DLEKLLDMSS (8353 aa)) are a coiled coil. Position 377 is a phosphoserine (K377). Position 732 is a phosphoserine (S732). Residues 1288–1310 (KKRDLQEQMEQAQQGGQAGPGQE) are disordered. T2268 carries the post-translational modification Phosphothreonine. S5655 carries the phosphoserine modification. Residues 5868–5894 (PVTEESGEEGTNSEISSPPACRSPSPV) are disordered. 19 Spectrin repeats span residues 5971 to 6080 (LERQ…LEEK), 6081 to 6187 (LSDQ…SLGE), 6377 to 6488 (RQSI…RLQQ), 6489 to 6584 (ILRF…RSSL), 6585 to 6694 (HQNL…LEMW), 6695 to 6798 (SHLD…TILK), 6799 to 6905 (HWTR…QEKL), 6906 to 7023 (HQLQ…LEGL), 7024 to 7131 (LESW…LTSA), 7132 to 7240 (LGQW…SKAL), 7241 to 7353 (LQLW…LQAG), 7354 to 7457 (VVDY…LQSF), 7458 to 7561 (LLQH…RGII), 7562 to 7674 (DSQI…LAFL), 7675 to 7786 (LKDW…NEWA), 7787 to 7886 (VFSE…LKET), 7887 to 8000 (LVAV…IEET), 8001 to 8109 (WRLW…LKHF), and 8110 to 8221 (ISQR…VRLP). Residues D8225 and S8227 each carry the phosphoserine modification. The disordered stretch occupies residues 8237-8287 (TALSDLRWQDPSADGMPSPQPSSNPSLSLPQPLRSERSGRDTPASVDSIPL). A compositionally biased stretch (low complexity) spans 8257-8269 (PSSNPSLSLPQPL). T8278 carries the post-translational modification Phosphothreonine. S8281, S8284, and S8308 each carry phosphoserine. Spectrin repeat units lie at residues 8332–8440 (SSLE…MKQN), 8441–8550 (LQKW…LQDA), and 8551–8668 (LMQC…SSSQ). Position 8363 is a phosphothreonine (T8363). The disordered stretch occupies residues 8673–8735 (SWSSADELDT…SDSSRSDPRP (63 aa)). Polar residues-rich tracts occupy residues 8682–8698 (TSGS…PNRQ) and 8706–8718 (SLSQ…SSPK). A compositionally biased stretch (basic and acidic residues) spans 8721–8735 (STRDGSDSSRSDPRP). A KASH domain is found at 8740–8799 (RAFLFRILRAALPFQLLLLLLIGLTCLVPMSEKDYSCALSNNFARSFHPMLRYTNGPPPL). The chain crosses the membrane as a helical; Anchor for type IV membrane protein span at residues 8749-8769 (AALPFQLLLLLLIGLTCLVPM). Residues 8770–8799 (SEKDYSCALSNNFARSFHPMLRYTNGPPPL) lie on the Perinuclear space side of the membrane.

The protein belongs to the nesprin family. As to quaternary structure, core component of LINC complexes which are composed of inner nuclear membrane SUN domain-containing proteins coupled to outer nuclear membrane KASH domain-containing nesprins. SUN and KASH domain-containing proteins seem to bind each other promiscuously; however, differentially expression of LINC complex constituents can give rise to specific assemblies. At least SUN1/2-containing core LINC complexes are proposed to be hexameric composed of three protomers of each KASH and SUN domain-containing protein. The SUN2:SYNE1/KASH1 LINC complex is a heterohexamer; the homotrimeric cloverleave-like conformation of the SUN domain is a prerequisite for LINC complex formation in which three separate SYNE1/KASH1 peptides bind at the interface of adjacent SUN domains. Self-associates. Interacts with SYNE3. Interacts with SUN3; proposed to form a spermatogenesis-specific LINC complex with SUN3 during sperm head formation. May interact with MUSK. Interacts with SPAG4/SUN4. Interacts with EMD and LMNA in vitro. Interacts with F-actin via its N-terminal domain. Interacts with DCTN1 and DYNC1I1/2; suggesting the association with the dynein-dynactin motor complex. Interacts (via KASH domain) with TMEM258. Post-translationally, the disulfid bond with SUN1 or SUN2 is required for stability of the respective LINC complex under tensile forces. Expressed in C2F3 and CH310T1/2 cells, brain and skeletal muscle (at protein level).

It localises to the nucleus outer membrane. The protein resides in the nucleus. The protein localises to the nucleus envelope. Its subcellular location is the cytoplasm. It is found in the cytoskeleton. It localises to the myofibril. The protein resides in the sarcomere. Multi-isomeric modular protein which forms a linking network between organelles and the actin cytoskeleton to maintain the subcellular spatial organization. As a component of the LINC (LInker of Nucleoskeleton and Cytoskeleton) complex involved in the connection between the nuclear lamina and the cytoskeleton. The nucleocytoplasmic interactions established by the LINC complex play an important role in the transmission of mechanical forces across the nuclear envelope and in nuclear movement and positioning. May be involved in nucleus-centrosome attachment. During interkinetic nuclear migration (INM) at G2 phase and nuclear migration in neural progenitors its LINC complex association with SUN1/2 and probably association with cytoplasmic dynein-dynactin motor complexes functions to pull the nucleus toward the centrosome; SYNE1 and SYNE2 seem to act redundantly in cerebellum, midbrain, brain stem, and other brain regions except cerebral cortex and hippocampus. Required for centrosome migration to the apical cell surface during early ciliogenesis. May be involved in nuclear remodeling during sperm head formation in spermatogenesis; a probable SUN3:SYNE1/KASH1 LINC complex may tether spermatid nuclei to posterior cytoskeletal structures such as the manchette. The sequence is that of Nesprin-1 from Mus musculus (Mouse).